The chain runs to 91 residues: Large ribosomal subunit protein uL23 (91 aa).

The protein belongs to the universal ribosomal protein uL23 family. As to quaternary structure, part of the 50S ribosomal subunit. Contacts protein L29, and trigger factor when it is bound to the ribosome.

Functionally, one of the early assembly proteins it binds 23S rRNA. One of the proteins that surrounds the polypeptide exit tunnel on the outside of the ribosome. Forms the main docking site for trigger factor binding to the ribosome. This Staphylococcus aureus (strain USA300) protein is Large ribosomal subunit protein uL23.